The chain runs to 63 residues: Large ribosomal subunit protein bL28 (63 aa).

Residues Met1 to His20 are disordered.

This sequence belongs to the bacterial ribosomal protein bL28 family.

The sequence is that of Large ribosomal subunit protein bL28 from Campylobacter fetus subsp. fetus (strain 82-40).